Reading from the N-terminus, the 208-residue chain is Small ribosomal subunit protein uS4 (208 aa).

Positions 98-160 (RRIDNTVYRL…SRQLQMINEA (63 aa)) constitute an S4 RNA-binding domain.

The protein belongs to the universal ribosomal protein uS4 family. Part of the 30S ribosomal subunit. Contacts protein S5. The interaction surface between S4 and S5 is involved in control of translational fidelity.

Its function is as follows. One of the primary rRNA binding proteins, it binds directly to 16S rRNA where it nucleates assembly of the body of the 30S subunit. In terms of biological role, with S5 and S12 plays an important role in translational accuracy. The chain is Small ribosomal subunit protein uS4 from Syntrophobacter fumaroxidans (strain DSM 10017 / MPOB).